Reading from the N-terminus, the 198-residue chain is ATP-dependent Clp protease proteolytic subunit (198 aa).

Ser-103 functions as the Nucleophile in the catalytic mechanism. Residue His-128 is part of the active site.

It belongs to the peptidase S14 family. As to quaternary structure, fourteen ClpP subunits assemble into 2 heptameric rings which stack back to back to give a disk-like structure with a central cavity, resembling the structure of eukaryotic proteasomes.

The protein localises to the cytoplasm. It carries out the reaction Hydrolysis of proteins to small peptides in the presence of ATP and magnesium. alpha-casein is the usual test substrate. In the absence of ATP, only oligopeptides shorter than five residues are hydrolyzed (such as succinyl-Leu-Tyr-|-NHMec, and Leu-Tyr-Leu-|-Tyr-Trp, in which cleavage of the -Tyr-|-Leu- and -Tyr-|-Trp bonds also occurs).. Cleaves peptides in various proteins in a process that requires ATP hydrolysis. Has a chymotrypsin-like activity. Plays a major role in the degradation of misfolded proteins. The chain is ATP-dependent Clp protease proteolytic subunit from Ruthia magnifica subsp. Calyptogena magnifica.